Consider the following 51-residue polypeptide: Large ribosomal subunit protein eL39 (51 aa).

It belongs to the eukaryotic ribosomal protein eL39 family.

The polypeptide is Large ribosomal subunit protein eL39 (Saccharolobus islandicus (strain Y.N.15.51 / Yellowstone #2) (Sulfolobus islandicus)).